The primary structure comprises 89 residues: Small ribosomal subunit protein uS15 (89 aa).

The protein belongs to the universal ribosomal protein uS15 family. As to quaternary structure, part of the 30S ribosomal subunit. Forms a bridge to the 50S subunit in the 70S ribosome, contacting the 23S rRNA.

Functionally, one of the primary rRNA binding proteins, it binds directly to 16S rRNA where it helps nucleate assembly of the platform of the 30S subunit by binding and bridging several RNA helices of the 16S rRNA. Forms an intersubunit bridge (bridge B4) with the 23S rRNA of the 50S subunit in the ribosome. The sequence is that of Small ribosomal subunit protein uS15 from Rhodospirillum centenum (strain ATCC 51521 / SW).